A 399-amino-acid chain; its full sequence is Elongation factor Tu (399 aa).

In terms of domain architecture, tr-type G spans 10–204 (KPHVNIGTIG…AVDANIPEPV (195 aa)). Residues 19 to 26 (GHVDHGKT) form a G1 region. 19 to 26 (GHVDHGKT) is a binding site for GTP. A Mg(2+)-binding site is contributed by Thr-26. The segment at 60 to 64 (GITIN) is G2. The tract at residues 81-84 (DCPG) is G3. Residues 81 to 85 (DCPGH) and 136 to 139 (NKCD) contribute to the GTP site. Positions 136-139 (NKCD) are G4. The segment at 174–176 (SGL) is G5.

This sequence belongs to the TRAFAC class translation factor GTPase superfamily. Classic translation factor GTPase family. EF-Tu/EF-1A subfamily. As to quaternary structure, monomer.

Its subcellular location is the cytoplasm. It catalyses the reaction GTP + H2O = GDP + phosphate + H(+). In terms of biological role, GTP hydrolase that promotes the GTP-dependent binding of aminoacyl-tRNA to the A-site of ribosomes during protein biosynthesis. This Synechococcus sp. (strain RCC307) protein is Elongation factor Tu.